The following is a 480-amino-acid chain: uncharacterized protein (480 aa).

The signal sequence occupies residues 1–21 (MSRYFSFFFLALFLHYRIIVA). Disordered stretches follow at residues 38–72 (SSHLLHHSLPPPLLTQSHSSLSDPDPEPEPSSAEC) and 116–147 (SPLITENGTHADPKTPDLKTSSEAQGDTNDQT). Over residues 51-60 (LTQSHSSLSD) the composition is skewed to low complexity. Residues 133–144 (LKTSSEAQGDTN) show a composition bias toward polar residues. The chain crosses the membrane as a helical span at residues 153–173 (YAVEIACVCFLIALAINYFVG). Residues 404-480 (QARNKTESGR…VPKMKMSRSH (77 aa)) form a disordered region. Over residues 407 to 465 (NKTESGRQKAAEEAYKELHNARQEALQKKKAEKKKMMEEAEAKMSAEVIRKKEAKERAR) the composition is skewed to basic and acidic residues. Residues 411–467 (SGRQKAAEEAYKELHNARQEALQKKKAEKKKMMEEAEAKMSAEVIRKKEAKERARQV) adopt a coiled-coil conformation. Residues 466-480 (QVKKAVPKMKMSRSH) show a composition bias toward basic residues.

The protein localises to the membrane. This is an uncharacterized protein from Arabidopsis thaliana (Mouse-ear cress).